Reading from the N-terminus, the 402-residue chain is Pentalenic acid synthase (402 aa).

Positions 1-28 (MTEPGTSVSAPVAFPQDRTCPYDPPTAY) are disordered. Cys-351 is a binding site for heme.

This sequence belongs to the cytochrome P450 family. Requires heme as cofactor.

It carries out the reaction 1-deoxypentalenate + reduced 2[4Fe-4S]-[ferredoxin] + O2 + 2 H(+) = pentalenate + oxidized 2[4Fe-4S]-[ferredoxin] + H2O. The protein operates within antibiotic biosynthesis; neopentalenolactone biosynthesis. Functionally, catalyzes the conversion of 1-deoxypentalenic acid to pentalenic acid in the biosynthesis of neopentalenolactone antibiotic. The polypeptide is Pentalenic acid synthase (cyp28) (Streptomyces avermitilis (strain ATCC 31267 / DSM 46492 / JCM 5070 / NBRC 14893 / NCIMB 12804 / NRRL 8165 / MA-4680)).